A 384-amino-acid polypeptide reads, in one-letter code: S-adenosylmethionine synthase (384 aa).

ATP is bound at residue histidine 16. Aspartate 18 contacts Mg(2+). Position 44 (glutamate 44) interacts with K(+). Positions 57 and 100 each coordinate L-methionine. A flexible loop region spans residues 100–110 (QSADIAMGVDE). Residues 165-167 (DAK), aspartate 240, 246-247 (RK), alanine 263, and lysine 267 contribute to the ATP site. Position 240 (aspartate 240) interacts with L-methionine. Lysine 271 provides a ligand contact to L-methionine.

This sequence belongs to the AdoMet synthase family. As to quaternary structure, homotetramer; dimer of dimers. It depends on Mg(2+) as a cofactor. K(+) is required as a cofactor.

It is found in the cytoplasm. It catalyses the reaction L-methionine + ATP + H2O = S-adenosyl-L-methionine + phosphate + diphosphate. Its pathway is amino-acid biosynthesis; S-adenosyl-L-methionine biosynthesis; S-adenosyl-L-methionine from L-methionine: step 1/1. Its function is as follows. Catalyzes the formation of S-adenosylmethionine (AdoMet) from methionine and ATP. The overall synthetic reaction is composed of two sequential steps, AdoMet formation and the subsequent tripolyphosphate hydrolysis which occurs prior to release of AdoMet from the enzyme. In Cellvibrio japonicus (strain Ueda107) (Pseudomonas fluorescens subsp. cellulosa), this protein is S-adenosylmethionine synthase.